Reading from the N-terminus, the 297-residue chain is MSETTYFGRVITAMVTPFTVEGQVNYALVEKLADYLVTHGSDGIVVCGTTGESPTLSWQEEYELFSIVKKAVNGRGKVIAGTGSNSTSEAIEATQQAAKLGLDGSLQVVPYYNKPPQEGLYEHFLTIAKACPDLPVMLYNIPGRTGQNMTPETIIKLAAVDNIVAVKEASGNLEQTCKIYCHTPENFAIYSGDDFLTLPLMTCGAVGVVSVASHLVGEEIQGMIQALLTGDAAKAIEINLKLFPLFKGLFCATNPIPIKAALNLVGWEVGGLRLPLCSLSPELEEGLAKIMQELALI.

Thr50 lines the pyruvate pocket. Tyr139 (proton donor/acceptor) is an active-site residue. The active-site Schiff-base intermediate with substrate is the Lys167. Val209 provides a ligand contact to pyruvate.

This sequence belongs to the DapA family. As to quaternary structure, homotetramer; dimer of dimers.

It is found in the cytoplasm. The catalysed reaction is L-aspartate 4-semialdehyde + pyruvate = (2S,4S)-4-hydroxy-2,3,4,5-tetrahydrodipicolinate + H2O + H(+). The protein operates within amino-acid biosynthesis; L-lysine biosynthesis via DAP pathway; (S)-tetrahydrodipicolinate from L-aspartate: step 3/4. Catalyzes the condensation of (S)-aspartate-beta-semialdehyde [(S)-ASA] and pyruvate to 4-hydroxy-tetrahydrodipicolinate (HTPA). The polypeptide is 4-hydroxy-tetrahydrodipicolinate synthase (Microcystis aeruginosa (strain NIES-843 / IAM M-2473)).